Reading from the N-terminus, the 443-residue chain is MSKLNMTPREIVAYLDEYIIGQKEAKKSIAIAFRNRYRRLQLEKSLQEEITPKNILMIGSTGVGKTEIARRIAKIMELPFVKVEASKYTEVGFVGRDVESMVRDLVNNSVLLVENEHKEKLKDKIEEAVIEKIAKKLLPPLPNGVSEEKKQEYANSLLKMQQRIAQGELDNREIEIEVRKKSIEIDSNVPPEILRVQENLIKVFHKEQDKVKKTLSVKEAKEALKAEISDTLLDGEAIKMEGLKRAESSGVIFIDEIDKIAVSSKEGSRQDPSKEGVQRDLLPIVEGSVVNTKYGSIKTEHILFIAAGAFHLSKPSDLIPELQGRFPLRVELENLTEEIMYMILTQTKTSIIKQYQALLKVEGVEIAFEDDAIKELAKLSYNANQKSEDIGARRLHTTIEKVLEDISFEAEDYSGQKVTITKELVQSKLEDLVADENLVKYIL.

ATP is bound by residues Ile20, 62-67 (GVGKTE), Asp255, Glu321, and Arg393.

Belongs to the ClpX chaperone family. HslU subfamily. In terms of assembly, a double ring-shaped homohexamer of HslV is capped on each side by a ring-shaped HslU homohexamer. The assembly of the HslU/HslV complex is dependent on binding of ATP.

Its subcellular location is the cytoplasm. Its function is as follows. ATPase subunit of a proteasome-like degradation complex; this subunit has chaperone activity. The binding of ATP and its subsequent hydrolysis by HslU are essential for unfolding of protein substrates subsequently hydrolyzed by HslV. HslU recognizes the N-terminal part of its protein substrates and unfolds these before they are guided to HslV for hydrolysis. This chain is ATP-dependent protease ATPase subunit HslU, found in Helicobacter pylori (strain G27).